The sequence spans 223 residues: Arginine kinase (223 aa).

One can recognise a Phosphagen kinase C-terminal domain in the interval 56 to 222 (FVISTRVRLI…LELIKIEKEM (167 aa)). ATP is bound by residues 59-63 (STRVR) and His-68. Cys-141 contacts L-arginine. Residues 150 to 154 (RASVH) and 175 to 180 (RGTRGE) each bind ATP. Residue Glu-180 participates in L-arginine binding.

This sequence belongs to the ATP:guanido phosphotransferase family.

The catalysed reaction is L-arginine + ATP = N(omega)-phospho-L-arginine + ADP + H(+). In Chionoecetes opilio (Atlantic snow crab), this protein is Arginine kinase.